A 271-amino-acid polypeptide reads, in one-letter code: MSRVGVLVLGPAGAGKSTFCNGIISYMQSVGRRAHIVNLDPAAEASEYEFTVDIRDLISLDDVMEELSLGPNGSLVYCFEYLLENLDWLDEEIGDYNDEYLIFDCPGQIELYTHIPVLPTIVRHLQNQLNFNLCASYLLEAPFVIDTSKFFSGALSAMSAMILLELPHINVLSKVDLIKDEYSKKRLKRFLNPDPMLLVDSANADTNSKFHQLNKAIANLVDDFGMVQFLPLEAKNPDSVSTILSYIDDITQWGEAQEPKEPNDALEIEDM.

GTP is bound at residue 13-18; sequence GAGKST. A Gly-Pro-Asn (GPN)-loop; involved in dimer interface motif is present at residues 70 to 72; that stretch reads GPN. Residue 173–176 coordinates GTP; sequence SKVD.

The protein belongs to the GPN-loop GTPase family. Heterodimers with GPN1 or GPN2. Binds to RNA polymerase II (RNAPII).

Small GTPase required for proper nuclear import of RNA polymerase II and III (RNAPII and RNAPIII). May act at an RNAP assembly step prior to nuclear import. This chain is GPN-loop GTPase 3, found in Eremothecium gossypii (strain ATCC 10895 / CBS 109.51 / FGSC 9923 / NRRL Y-1056) (Yeast).